Consider the following 464-residue polypeptide: Protein FAM90A3 (464 aa).

Disordered regions lie at residues 1–42 (MMAR…DPRL), 70–389 (PATL…HDGA), and 411–437 (APSF…SEAP). 2 stretches are compositionally biased toward basic and acidic residues: residues 74–89 (GKKE…KPRV) and 97–114 (NKDK…DPQR). Over residues 180 to 197 (LASLSPLRKASLSSSSSL) the composition is skewed to low complexity.

It belongs to the FAM90 family.

In Homo sapiens (Human), this protein is Protein FAM90A3.